The primary structure comprises 154 residues: UPF0260 protein NTHI1811 (154 aa).

It belongs to the UPF0260 family.

This is UPF0260 protein NTHI1811 from Haemophilus influenzae (strain 86-028NP).